Reading from the N-terminus, the 188-residue chain is Elongation factor P (188 aa).

Belongs to the elongation factor P family.

It localises to the cytoplasm. The protein operates within protein biosynthesis; polypeptide chain elongation. Functionally, involved in peptide bond synthesis. Stimulates efficient translation and peptide-bond synthesis on native or reconstituted 70S ribosomes in vitro. Probably functions indirectly by altering the affinity of the ribosome for aminoacyl-tRNA, thus increasing their reactivity as acceptors for peptidyl transferase. This Exiguobacterium sp. (strain ATCC BAA-1283 / AT1b) protein is Elongation factor P.